A 198-amino-acid polypeptide reads, in one-letter code: Superoxide dismutase [Fe] (198 aa).

4 residues coordinate Fe cation: His27, His74, Asp158, and His162.

The protein belongs to the iron/manganese superoxide dismutase family. In terms of assembly, homodimer. Requires Fe cation as cofactor.

Its subcellular location is the cytoplasm. The catalysed reaction is 2 superoxide + 2 H(+) = H2O2 + O2. Its function is as follows. Destroys superoxide anion radicals which are normally produced within the cells and which are toxic to biological systems. In Plasmodium falciparum (isolate HB3), this protein is Superoxide dismutase [Fe] (SODB).